Here is a 412-residue protein sequence, read N- to C-terminus: Argininosuccinate synthase (412 aa).

ATP is bound at residue 8-16 (AYSGGLDTS). Tyr87 provides a ligand contact to L-citrulline. An ATP-binding site is contributed by Gly117. 3 residues coordinate L-aspartate: Thr119, Asn123, and Asp124. Asn123 contacts L-citrulline. L-citrulline contacts are provided by Arg127, Ser175, Glu259, and Tyr271.

Belongs to the argininosuccinate synthase family. Type 1 subfamily. Homotetramer.

The protein resides in the cytoplasm. The enzyme catalyses L-citrulline + L-aspartate + ATP = 2-(N(omega)-L-arginino)succinate + AMP + diphosphate + H(+). It functions in the pathway amino-acid biosynthesis; L-arginine biosynthesis; L-arginine from L-ornithine and carbamoyl phosphate: step 2/3. The sequence is that of Argininosuccinate synthase from Clavibacter michiganensis subsp. michiganensis (strain NCPPB 382).